The sequence spans 99 residues: Aspartyl/glutamyl-tRNA(Asn/Gln) amidotransferase subunit C (99 aa).

It belongs to the GatC family. In terms of assembly, heterotrimer of A, B and C subunits.

It catalyses the reaction L-glutamyl-tRNA(Gln) + L-glutamine + ATP + H2O = L-glutaminyl-tRNA(Gln) + L-glutamate + ADP + phosphate + H(+). The catalysed reaction is L-aspartyl-tRNA(Asn) + L-glutamine + ATP + H2O = L-asparaginyl-tRNA(Asn) + L-glutamate + ADP + phosphate + 2 H(+). In terms of biological role, allows the formation of correctly charged Asn-tRNA(Asn) or Gln-tRNA(Gln) through the transamidation of misacylated Asp-tRNA(Asn) or Glu-tRNA(Gln) in organisms which lack either or both of asparaginyl-tRNA or glutaminyl-tRNA synthetases. The reaction takes place in the presence of glutamine and ATP through an activated phospho-Asp-tRNA(Asn) or phospho-Glu-tRNA(Gln). The polypeptide is Aspartyl/glutamyl-tRNA(Asn/Gln) amidotransferase subunit C (Bifidobacterium longum (strain NCC 2705)).